Here is a 683-residue protein sequence, read N- to C-terminus: DNA-directed RNA polymerase subunit beta' (683 aa).

Zn(2+)-binding residues include cysteine 69, cysteine 71, cysteine 87, and cysteine 90. The Mg(2+) site is built by aspartate 492, aspartate 494, and aspartate 496.

This sequence belongs to the RNA polymerase beta' chain family. RpoC1 subfamily. As to quaternary structure, in plastids the minimal PEP RNA polymerase catalytic core is composed of four subunits: alpha, beta, beta', and beta''. When a (nuclear-encoded) sigma factor is associated with the core the holoenzyme is formed, which can initiate transcription. Mg(2+) is required as a cofactor. It depends on Zn(2+) as a cofactor.

The protein localises to the plastid. Its subcellular location is the chloroplast. It catalyses the reaction RNA(n) + a ribonucleoside 5'-triphosphate = RNA(n+1) + diphosphate. Its function is as follows. DNA-dependent RNA polymerase catalyzes the transcription of DNA into RNA using the four ribonucleoside triphosphates as substrates. In Coffea arabica (Arabian coffee), this protein is DNA-directed RNA polymerase subunit beta'.